The sequence spans 337 residues: MDLDVLNMFLVAGGTLLVPILAFVTSFLLWPAALIKIYYWYWRRALGMQVKFSSYGNYKFCYTSRGKPGNKASVLMLHGFSAHKDMWLSVVKFLPKNLHLVCVDMPGHEGTTRSALDDYSICGQVKRIHQFVESIGLNKRTFHLVGTSMGGNVAGVYAAQHPTDISSLTLICPAGLMYPTESKFLKHLKGLEKSGDDQRILLIPSTAGEMEDMLRLCSFVRFKIPQQVLQGLVDVRIPHNEFYRQLFMALVNEKSRHSLQENMNKIVAPTQIIWGKQDQVLDVSGAEVLAGSIRGCQVEILENCGHSVVMERPRKSAKLMTDFLSSLQSTENNKKHE.

Residues 1–19 (MDLDVLNMFLVAGGTLLVP) are Extracellular-facing. The helical; Signal-anchor for type II membrane protein transmembrane segment at 20 to 42 (ILAFVTSFLLWPAALIKIYYWYW) threads the bilayer. Residues 43-337 (RRALGMQVKF…QSTENNKKHE (295 aa)) are Cytoplasmic-facing. An AB hydrolase-1 domain is found at 73–313 (SVLMLHGFSA…CGHSVVMERP (241 aa)). The Nucleophile role is filled by Ser148. Residues Asp278 and His306 each act as charge relay system in the active site.

Belongs to the AB hydrolase superfamily.

The protein resides in the late endosome membrane. The protein localises to the lysosome membrane. Its subcellular location is the mitochondrion membrane. It carries out the reaction Hydrolyzes glycerol monoesters of long-chain fatty acids.. It catalyses the reaction 1-octanoylglycerol + H2O = octanoate + glycerol + H(+). The catalysed reaction is 1-decanoylglycerol + H2O = decanoate + glycerol + H(+). The enzyme catalyses 1-dodecanoylglycerol + H2O = dodecanoate + glycerol + H(+). It carries out the reaction 1-tetradecanoylglycerol + H2O = tetradecanoate + glycerol + H(+). It catalyses the reaction 2-hexadecanoylglycerol + H2O = glycerol + hexadecanoate + H(+). The catalysed reaction is 2-(9Z-octadecenoyl)-glycerol + H2O = glycerol + (9Z)-octadecenoate + H(+). The enzyme catalyses 1-(9Z-octadecenoyl)-glycerol + H2O = glycerol + (9Z)-octadecenoate + H(+). It carries out the reaction 2-(9Z,12Z-octadecadienoyl)-glycerol + H2O = (9Z,12Z)-octadecadienoate + glycerol + H(+). It catalyses the reaction 2-(5Z,8Z,11Z,14Z-eicosatetraenoyl)-glycerol + H2O = glycerol + (5Z,8Z,11Z,14Z)-eicosatetraenoate + H(+). The catalysed reaction is 1-(5Z,8Z,11Z,14Z-eicosatetraenoyl)-glycerol + H2O = glycerol + (5Z,8Z,11Z,14Z)-eicosatetraenoate + H(+). The enzyme catalyses 1-(9Z,12Z-octadecadienoyl)-glycerol + H2O = (9Z,12Z)-octadecadienoate + glycerol + H(+). It carries out the reaction 3-(9Z-octadecenoyl)-sn-glycero-1-phospho-(3'-(9Z-octadecenoyl)-1'-sn-glycerol) + H2O = 3-(9Z-octadecenoyl)-sn-glycero-1-phospho-(1'-sn-glycerol) + (9Z)-octadecenoate + H(+). It catalyses the reaction (S,S)-2-(9Z-octadecenoyl)-sn-glycero-1-phospho-(2'-(9Z-octadecenoyl)-1'-sn-glycerol) + H2O = (S,S)-2-(9Z-octadecenoyl)-sn-glycero-1-phospho-(1'-sn-glycerol) + (9Z)-octadecenoate + H(+). The catalysed reaction is (R,R)-2-(9Z-octadecenoyl)-sn-glycero-3-phospho-(2'-(9Z-octadecenoyl)-3'-sn-glycerol) + H2O = (R,R)-2-(9Z-octadecenoyl)-sn-glycero-3-phospho-(3'-sn-glycerol) + (9Z)-octadecenoate + H(+). Functionally, lipase that preferentially hydrolysis medium-chain saturated monoacylglycerols including 2-arachidonoylglycerol. Through 2-arachidonoylglycerol degradation may regulate endocannabinoid signaling pathways. Also has a lysophosphatidyl lipase activity with a preference for lysophosphatidylglycerol among other lysophospholipids. Also able to degrade bis(monoacylglycero)phosphate (BMP) and constitutes the major enzyme for BMP catabolism. BMP, also known as lysobisphosphatidic acid, is enriched in late endosomes and lysosomes and plays a key role in the formation of intraluminal vesicles and in lipid sorting. The chain is Monoacylglycerol lipase abhd6-A (abhd6-a) from Xenopus laevis (African clawed frog).